The following is an 86-amino-acid chain: Omega-theraphotoxin-Hhn1f 2 (86 aa).

An N-terminal signal peptide occupies residues 1–21 (MKSIVFVALFGLALLAVVCSA). The propeptide occupies 22–50 (SEDAHKELLKEVVRAVVVDKTDAVQAEER). 3 disulfide bridges follow: Cys-52/Cys-66, Cys-59/Cys-71, and Cys-65/Cys-78.

The protein belongs to the neurotoxin 10 (Hwtx-1) family. 17 (Hntx-9) subfamily. Expressed by the venom gland.

The protein localises to the secreted. Functionally, ion channel inhibitor. This is Omega-theraphotoxin-Hhn1f 2 from Cyriopagopus hainanus (Chinese bird spider).